The chain runs to 230 residues: Mediator of RNA polymerase II transcription subunit 7 (230 aa).

Disordered stretches follow at residues 1–22 and 206–230; these read MSREESVSGANDVSSLYPPPPP and QSQSQSQSQSQSQSQSQSQLQSDSQ.

Belongs to the Mediator complex subunit 7 family. In terms of assembly, component of the Mediator complex.

The protein localises to the nucleus. In terms of biological role, component of the Mediator complex, a coactivator involved in the regulated transcription of nearly all RNA polymerase II-dependent genes. Mediator functions as a bridge to convey information from gene-specific regulatory proteins to the basal RNA polymerase II transcription machinery. Mediator is recruited to promoters by direct interactions with regulatory proteins and serves as a scaffold for the assembly of a functional preinitiation complex with RNA polymerase II and the general transcription factors. The sequence is that of Mediator of RNA polymerase II transcription subunit 7 (MED7) from Candida glabrata (strain ATCC 2001 / BCRC 20586 / JCM 3761 / NBRC 0622 / NRRL Y-65 / CBS 138) (Yeast).